The sequence spans 96 residues: MARPKIERRICGRAAHHCFKPNGVPFHQLEQVAILPEELEALRLADLEGLSQQQAADQMGISRQTFGNTVKSARFKVAKSLVEGHALVFPNEESNL.

It belongs to the UPF0251 family.

The chain is UPF0251 protein VPA0321 from Vibrio parahaemolyticus serotype O3:K6 (strain RIMD 2210633).